A 533-amino-acid polypeptide reads, in one-letter code: Quinate permease (533 aa).

The Cytoplasmic portion of the chain corresponds to 1-21 (MSILALVEDRPTPREVYNWRV). A helical membrane pass occupies residues 22–42 (YLLAAVASFTSCMIGYDSAFI). At 43–67 (GTTLSLQSFQNEFNWESLNTDLISA) the chain is on the extracellular side. The chain crosses the membrane as a helical span at residues 68–88 (NIVSLYQAGAFFGALFAYPIG). At 89–94 (HFWGRR) the chain is on the cytoplasmic side. Residues 95 to 115 (WGLMFSALIFFLGAGMMLGAN) traverse the membrane as a helical segment. The Extracellular segment spans residues 116 to 127 (GDRGLGLIYGGR). Residues 128-148 (VLAGIGVGAGSNICPIYISEM) form a helical membrane-spanning segment. The Cytoplasmic segment spans residues 149–156 (APPAIRGR). The chain crosses the membrane as a helical span at residues 157-177 (LVGVYELGWQIGGVVGFWINY). Over 178 to 191 (GVDETLAPSHKQWI) the chain is Extracellular. Residues 192-212 (IPFAVQLIPAGLLIIGALLIR) form a helical membrane-spanning segment. Topologically, residues 213-282 (ESPRWLFLRG…AWTNKRILYR (70 aa)) are cytoplasmic. A helical transmembrane segment spans residues 283–303 (LFLGSMLFLWQNGSGINAINY). At 304 to 324 (YSPRVFKSIGVSGGNTSLLTT) the chain is on the extracellular side. A helical transmembrane segment spans residues 325-346 (GIFGVVKAVITFVWLLYLIDHF). Residues 347-349 (GRR) are Cytoplasmic-facing. Residues 350 to 370 (NLLLVGAAGGSVCLWIVGGYI) traverse the membrane as a helical segment. The Extracellular segment spans residues 371 to 385 (KIAKPENNPEGTQLD). A helical transmembrane segment spans residues 386 to 406 (SGGIAAIFFFYLWTAFYTPSW). Residues 407–431 (NGTPWVINSEMFDPTVRSLAQACAA) lie on the Cytoplasmic side of the membrane. Residues 432–452 (ASNWLWNFLISRFTPQMFTSM) form a helical membrane-spanning segment. Residues 453 to 454 (GY) lie on the Extracellular side of the membrane. A helical membrane pass occupies residues 455–475 (GVYFFFASLMILSIVFVFFLI). The Cytoplasmic portion of the chain corresponds to 476-533 (PETKGVPLESMETLFDKKPVWHAHSQLIRELRENEEAFRADMGASGKGGVTKEYVEEA).

It belongs to the major facilitator superfamily. Sugar transporter (TC 2.A.1.1) family. As to quaternary structure, interacts with creB. Ubiquitinated. Deubiquitinated by creB, probably to control its activity or amount.

Its subcellular location is the cell membrane. In terms of biological role, integral membrane transporter that imports quinic acid to be catabolized as a carbon source. The polypeptide is Quinate permease (qutD) (Emericella nidulans (strain FGSC A4 / ATCC 38163 / CBS 112.46 / NRRL 194 / M139) (Aspergillus nidulans)).